A 673-amino-acid chain; its full sequence is Glycine--tRNA ligase beta subunit (673 aa).

It belongs to the class-II aminoacyl-tRNA synthetase family. Tetramer of two alpha and two beta subunits.

The protein resides in the cytoplasm. It carries out the reaction tRNA(Gly) + glycine + ATP = glycyl-tRNA(Gly) + AMP + diphosphate. The protein is Glycine--tRNA ligase beta subunit of Lactococcus lactis subsp. lactis (strain IL1403) (Streptococcus lactis).